A 302-amino-acid chain; its full sequence is Protoheme IX farnesyltransferase 1 (302 aa).

Transmembrane regions (helical) follow at residues valine 30–valine 50, leucine 52–phenylalanine 72, alanine 102–asparagine 122, leucine 124–leucine 144, isoleucine 152–glycine 172, alanine 178–isoleucine 198, cysteine 224–methionine 244, cysteine 245–tryptophan 265, and phenylalanine 282–valine 302.

It belongs to the UbiA prenyltransferase family. Protoheme IX farnesyltransferase subfamily.

Its subcellular location is the cell inner membrane. It catalyses the reaction heme b + (2E,6E)-farnesyl diphosphate + H2O = Fe(II)-heme o + diphosphate. The protein operates within porphyrin-containing compound metabolism; heme O biosynthesis; heme O from protoheme: step 1/1. Converts heme B (protoheme IX) to heme O by substitution of the vinyl group on carbon 2 of heme B porphyrin ring with a hydroxyethyl farnesyl side group. In Shewanella woodyi (strain ATCC 51908 / MS32), this protein is Protoheme IX farnesyltransferase 1.